A 775-amino-acid chain; its full sequence is Putative late blight resistance protein homolog R1A-3 (775 aa).

The stretch at 16 to 39 (PRMNEEIVGFEDVIENLRKKLLSE) forms a coiled coil. Residues 17-237 (RMNEEIVGFE…LSEMEKEVEC (221 aa)) form the NB-ARC domain. 50-57 (GMPGLGKT) provides a ligand contact to ATP. In terms of domain architecture, HMA spans 711 to 775 (IKKMILQFDI…VGKLIDSGML (65 aa)).

Belongs to the disease resistance NB-LRR family.

Its subcellular location is the cytoplasm. It localises to the membrane. Its function is as follows. Confers resistance to late blight (Phytophthora infestans) races carrying the avirulence gene Avr1. Resistance proteins guard the plant against pathogens that contain an appropriate avirulence protein via an indirect interaction with this avirulence protein. That triggers a defense system including the hypersensitive response, which restricts the pathogen growth. The protein is Putative late blight resistance protein homolog R1A-3 (R1A-3) of Solanum demissum (Wild potato).